Here is a 494-residue protein sequence, read N- to C-terminus: Aspartyl/glutamyl-tRNA(Asn/Gln) amidotransferase subunit B (494 aa).

The protein belongs to the GatB/GatE family. GatB subfamily. In terms of assembly, heterotrimer of A, B and C subunits.

It carries out the reaction L-glutamyl-tRNA(Gln) + L-glutamine + ATP + H2O = L-glutaminyl-tRNA(Gln) + L-glutamate + ADP + phosphate + H(+). It catalyses the reaction L-aspartyl-tRNA(Asn) + L-glutamine + ATP + H2O = L-asparaginyl-tRNA(Asn) + L-glutamate + ADP + phosphate + 2 H(+). In terms of biological role, allows the formation of correctly charged Asn-tRNA(Asn) or Gln-tRNA(Gln) through the transamidation of misacylated Asp-tRNA(Asn) or Glu-tRNA(Gln) in organisms which lack either or both of asparaginyl-tRNA or glutaminyl-tRNA synthetases. The reaction takes place in the presence of glutamine and ATP through an activated phospho-Asp-tRNA(Asn) or phospho-Glu-tRNA(Gln). This chain is Aspartyl/glutamyl-tRNA(Asn/Gln) amidotransferase subunit B, found in Nitrobacter hamburgensis (strain DSM 10229 / NCIMB 13809 / X14).